Consider the following 252-residue polypeptide: tRNA (guanine-N(7)-)-methyltransferase (252 aa).

S-adenosyl-L-methionine contacts are provided by glutamate 51, aspartate 76, asparagine 103, and aspartate 125. Aspartate 125 is a catalytic residue. Substrate is bound by residues lysine 129, aspartate 159, and threonine 199–glutamate 202.

This sequence belongs to the class I-like SAM-binding methyltransferase superfamily. TrmB family.

It carries out the reaction guanosine(46) in tRNA + S-adenosyl-L-methionine = N(7)-methylguanosine(46) in tRNA + S-adenosyl-L-homocysteine. It functions in the pathway tRNA modification; N(7)-methylguanine-tRNA biosynthesis. Catalyzes the formation of N(7)-methylguanine at position 46 (m7G46) in tRNA. This chain is tRNA (guanine-N(7)-)-methyltransferase, found in Bacteroides fragilis (strain YCH46).